The primary structure comprises 407 residues: Cation efflux system protein CusB (407 aa).

An N-terminal signal peptide occupies residues 1–28; it reads MKKIALIIGSMIAGGIISAAGFTWVAKA.

The protein belongs to the membrane fusion protein (MFP) (TC 8.A.1) family. The cus efflux system is composed of CusA, CusB, CusC and CusF.

In terms of biological role, part of a cation efflux system that mediates resistance to copper and silver. The chain is Cation efflux system protein CusB (cusB) from Escherichia coli (strain K12).